Reading from the N-terminus, the 215-residue chain is Cytochrome b6 (215 aa).

A helical transmembrane segment spans residues 32-52 (IFYCLGGITLVCFLIQFATGF). Cys-35 is a heme c binding site. Heme b contacts are provided by His-86 and His-100. Helical transmembrane passes span 90–110 (ASMM…TGGF), 116–136 (LTWV…VTGY), and 186–206 (LHTF…FLMI). 2 residues coordinate heme b: His-187 and His-202.

Belongs to the cytochrome b family. PetB subfamily. The 4 large subunits of the cytochrome b6-f complex are cytochrome b6, subunit IV (17 kDa polypeptide, PetD), cytochrome f and the Rieske protein, while the 4 small subunits are PetG, PetL, PetM and PetN. The complex functions as a dimer. Heme b serves as cofactor. Requires heme c as cofactor.

It is found in the cellular thylakoid membrane. Functionally, component of the cytochrome b6-f complex, which mediates electron transfer between photosystem II (PSII) and photosystem I (PSI), cyclic electron flow around PSI, and state transitions. The protein is Cytochrome b6 of Synechococcus sp. (strain JA-3-3Ab) (Cyanobacteria bacterium Yellowstone A-Prime).